Here is a 119-residue protein sequence, read N- to C-terminus: Ribonuclease P protein component (119 aa).

Belongs to the RnpA family. Consists of a catalytic RNA component (M1 or rnpB) and a protein subunit.

The catalysed reaction is Endonucleolytic cleavage of RNA, removing 5'-extranucleotides from tRNA precursor.. Functionally, RNaseP catalyzes the removal of the 5'-leader sequence from pre-tRNA to produce the mature 5'-terminus. It can also cleave other RNA substrates such as 4.5S RNA. The protein component plays an auxiliary but essential role in vivo by binding to the 5'-leader sequence and broadening the substrate specificity of the ribozyme. In Listeria monocytogenes serotype 4a (strain HCC23), this protein is Ribonuclease P protein component.